Consider the following 425-residue polypeptide: MIAEIICVGTELLLGDILNSNAQFLAKQLANLGIAHYYQTVVGDNPDRIKQVLAIATDRSQILIFTGGLGPTPDDLTVATIADFFETPLIERPEIIEDITKKFARRGRIMTASNRKQALIPQGANILPNPIGTAPGIIWQPVQNITIMTFPGVPTEMKSMWQETAIPYMQSQGWCEQTIYSRTLKFWGITESSLAEKVAPFLEKENPTVAPYANYGEVKLRISARATSLELANKLIIPVEEEIKDIAGIDFYGINDESLASVVGKLLLESGETLAVAESCTGGSLGSMLTSIPGSSEYFYGGVISYENQVKITLLDVNLEDLMAEGSVSHVVAKQMASGVVKKLGTNWGISITGIAGPGGGSDTKPVGLVYIGIARYDDIVESFEYRFSNLRDRNWIRRVSVSTALDLLRRKLYLSKQRPQHHQA.

This sequence belongs to the CinA family.

This Trichodesmium erythraeum (strain IMS101) protein is CinA-like protein.